The following is a 154-amino-acid chain: 6,7-dimethyl-8-ribityllumazine synthase (154 aa).

5-amino-6-(D-ribitylamino)uracil contacts are provided by residues Phe-23, 57–59 (AFE), and 81–83 (AVI). A (2S)-2-hydroxy-3-oxobutyl phosphate-binding site is contributed by 86–87 (AT). Residue His-89 is the Proton donor of the active site. A 5-amino-6-(D-ribitylamino)uracil-binding site is contributed by Phe-114. (2S)-2-hydroxy-3-oxobutyl phosphate is bound at residue Arg-128.

The protein belongs to the DMRL synthase family.

It carries out the reaction (2S)-2-hydroxy-3-oxobutyl phosphate + 5-amino-6-(D-ribitylamino)uracil = 6,7-dimethyl-8-(1-D-ribityl)lumazine + phosphate + 2 H2O + H(+). The protein operates within cofactor biosynthesis; riboflavin biosynthesis; riboflavin from 2-hydroxy-3-oxobutyl phosphate and 5-amino-6-(D-ribitylamino)uracil: step 1/2. Its function is as follows. Catalyzes the formation of 6,7-dimethyl-8-ribityllumazine by condensation of 5-amino-6-(D-ribitylamino)uracil with 3,4-dihydroxy-2-butanone 4-phosphate. This is the penultimate step in the biosynthesis of riboflavin. This chain is 6,7-dimethyl-8-ribityllumazine synthase, found in Nautilia profundicola (strain ATCC BAA-1463 / DSM 18972 / AmH).